We begin with the raw amino-acid sequence, 205 residues long: Max-like protein homolog 2 (205 aa).

Composition is skewed to low complexity over residues 1 to 12 and 26 to 40; these read MSRSRSAAASSS and SASS…ATNS. The tract at residues 1-58 is disordered; the sequence is MSRSRSAAASSSQKPDDMDLMSPDGSASSPSAPNTPATNSGGFSSDRKKATHLRCERQ. Residues 45–58 show a composition bias toward basic and acidic residues; sequence SDRKKATHLRCERQ. A basic motif region spans residues 47–60; that stretch reads RKKATHLRCERQRR. A bHLH domain is found at 47 to 101; the sequence is RKKATHLRCERQRREAINSGYSDLKDLIPQTTTSLGCKTTNAAILFRACDFMSQL. Positions 61–101 are helix-loop-helix motif; it reads EAINSGYSDLKDLIPQTTTSLGCKTTNAAILFRACDFMSQL. The stretch at 98-132 forms a coiled coil; the sequence is MSQLKTDISDADKQLAQLNAQAAALEMIASEYEQM.

Widely expressed.

The protein localises to the nucleus. Its subcellular location is the cytoplasm. It localises to the mitochondrion. In terms of biological role, transcription factor. Binds to the E box motif 5'-CACGTG-3', probably in a heterodimeric complex with mml-1. Involved in modulating longevity in response to TOR signaling, dietary restriction, the decline in protein homeostasis associated with normal aging, germline signaling and the insulin-like signaling pathway. Plays a role in autophagy. Involved in regulating migration of the ray 1 precursor cells in the male tail, acting in concert with Wnt and semaphorin signaling pathways. Regulates transcription of genes encoding extracellular matrix (ECM) components which may contribute to the substratum required for migration of the neighboring ray 1 precursor cells. Required for resistance to oxidative stress. Involved in promoting infection by the microsporidian pathogen N.parisii, probably acting independently of its canonical partner, mml-1. This Caenorhabditis elegans protein is Max-like protein homolog 2.